The sequence spans 1508 residues: Calponin homology domain-containing protein DDB_G0272472 (1508 aa).

Disordered stretches follow at residues 1 to 165 (MFRN…KNDF), 197 to 290 (DSEE…NLSP), 309 to 518 (DFKS…TSIV), 531 to 561 (AANA…LFND), 680 to 706 (KEKQ…EKEL), and 1036 to 1391 (KIEK…KKSA). Residues 81–107 (SSSPSTSTTTTTKSSSTTTTTTTSSSS) are compositionally biased toward low complexity. The span at 208-222 (PIKKKQSNDLEKNIF) shows a compositional bias: basic and acidic residues. Composition is skewed to low complexity over residues 234 to 251 (KQST…QKQP), 263 to 290 (FGDS…NLSP), and 315 to 332 (SNNT…KSKP). 2 stretches are compositionally biased toward basic and acidic residues: residues 337–346 (QKEEIKEVST) and 362–371 (VDEKPKERST). Over residues 380–391 (KTVTVKSNNSFE) the composition is skewed to polar residues. The span at 395–438 (FGSTTTNDDGGDNDFSFTPATTPSSSSSTKATTTSPSSTTTTKS) shows a compositional bias: low complexity. The span at 439-452 (NINIGQKSNKSVDQ) shows a compositional bias: polar residues. The stretch at 455 to 498 (QFLNDIFQQEEQDKKRREEEAKLKQQQKQKEKEQIKDEIDDLFK) forms a coiled coil. Basic and acidic residues predominate over residues 465–498 (EQDKKRREEEAKLKQQQKQKEKEQIKDEIDDLFK). Composition is skewed to low complexity over residues 500–516 (SKPT…STTS) and 531–557 (AANA…KSTN). Basic and acidic residues predominate over residues 1036–1164 (KIEKEKEERD…DQEEKEKQLK (129 aa)). Low complexity-rich tracts occupy residues 1165-1181 (EQQQ…TTTT) and 1189-1206 (DSDA…SSHS). The span at 1216–1225 (SKAKGRKKPT) shows a compositional bias: basic residues. Residues 1226–1235 (RRELTKDGNR) show a composition bias toward basic and acidic residues. The span at 1333–1355 (PTVTQTTTTTTTPPTTPPSSSVQ) shows a compositional bias: low complexity. The segment covering 1362 to 1374 (RSFSGSSFMGINS) has biased composition (polar residues). Residues 1397–1504 (MKALDVLLQW…YLSEFFKVMK (108 aa)) enclose the Calponin-homology (CH) domain.

This is Calponin homology domain-containing protein DDB_G0272472 from Dictyostelium discoideum (Social amoeba).